The following is a 318-amino-acid chain: NADH-ubiquinone oxidoreductase chain 1 (318 aa).

8 helical membrane-spanning segments follow: residues 2–22 (FLMNLLLLIIPILVAMAFLTL), 68–88 (ISLFIIAPSLALTLAFTMWIP), 102–122 (ILFILATSSLAVYTILWSGWA), 146–166 (LAIILLSVLLLNGSFTLSSLI), 171–191 (FTWLLLPTWPLAMMWFISTLA), 217–237 (AGPFALFFMAEYTNIIMMNAL), 253–273 (EMFTFSFTLKTLMLTATFLWI), and 294–314 (LPLTLALCMWHISLPVIMACI).

This sequence belongs to the complex I subunit 1 family.

The protein resides in the mitochondrion inner membrane. It catalyses the reaction a ubiquinone + NADH + 5 H(+)(in) = a ubiquinol + NAD(+) + 4 H(+)(out). Its function is as follows. Core subunit of the mitochondrial membrane respiratory chain NADH dehydrogenase (Complex I) that is believed to belong to the minimal assembly required for catalysis. Complex I functions in the transfer of electrons from NADH to the respiratory chain. The immediate electron acceptor for the enzyme is believed to be ubiquinone. The chain is NADH-ubiquinone oxidoreductase chain 1 (MT-ND1) from Tamias sibiricus (Siberian chipmunk).